We begin with the raw amino-acid sequence, 308 residues long: Putative protein TIC 214 N-terminal part (308 aa).

6 helical membrane-spanning segments follow: residues 18 to 38, 64 to 84, 87 to 107, 124 to 144, 172 to 192, and 215 to 235; these read IINS…FSIG, FITG…HLAL, PHTI…WNNH, LSIQ…HFIL, VGWL…LSWI, and IFSI…PSPI. The span at 239-249 shows a compositional bias: basic and acidic residues; that stretch reads KLKETSEMEER. Positions 239-308 are disordered; that stretch reads KLKETSEMEE…RDPSEWKGNI (70 aa). Over residues 250–262 the composition is skewed to acidic residues; the sequence is GESEEETDVEIET. Basic and acidic residues predominate over residues 264-273; that stretch reads SETKETKQEQ. A compositionally biased stretch (acidic residues) spans 275-293; the sequence is GSTEEDPSLCSEEQEDPDK. Over residues 294 to 308 the composition is skewed to basic and acidic residues; sequence LDETGRDPSEWKGNI.

The protein belongs to the TIC214 family. Part of the Tic complex.

The protein localises to the plastid. It localises to the chloroplast inner membrane. In terms of biological role, involved in protein precursor import into chloroplasts. May be part of an intermediate translocation complex acting as a protein-conducting channel at the inner envelope. The sequence is that of Putative protein TIC 214 N-terminal part from Piper cenocladum (Ant piper).